The sequence spans 202 residues: MKMKSLFVAMITFFSAAPFAHWQPIGNAEYTWGPFHVYTIGLFSETGTYQENERPLMLSFKYEKPIEGKNFAITLIKEIETLKLNDGDTQSWLKEMQATFPDFSPNDILNYIALPDRGYFVLNDTVLEHDFDAKFNQAFIGIWLAPNSTFVKLQPQLLGKTKSNHEATEFYLKPEIESFDEQDSTPELPPNYLLDSQKKSQG.

A disordered region spans residues 179–202; sequence FDEQDSTPELPPNYLLDSQKKSQG.

This is an uncharacterized protein from Haemophilus influenzae (strain ATCC 51907 / DSM 11121 / KW20 / Rd).